Reading from the N-terminus, the 148-residue chain is Putative HTH-type transcriptional regulator NMA1593 (148 aa).

The HTH rrf2-type domain occupies arginine 2–glutamate 131.

The chain is Putative HTH-type transcriptional regulator NMA1593 from Neisseria meningitidis serogroup A / serotype 4A (strain DSM 15465 / Z2491).